Here is a 513-residue protein sequence, read N- to C-terminus: Ferulic acid decarboxylase 1 (513 aa).

Mn(2+) is bound by residues Asn174, His197, and Glu240. Prenylated FMN-binding positions include 174-179, 196-197, and Glu240; these read NWSIAR and QH. Glu289 serves as the catalytic Proton donor. Lys405 contributes to the prenylated FMN binding site.

The protein belongs to the UbiD family. UbiD-like/FDC subfamily. As to quaternary structure, homodimer. May form higher order oligomers. The cofactor is Mn(2+). Prenylated FMN serves as cofactor.

The protein resides in the cytoplasm. The catalysed reaction is (E)-4-coumarate + H(+) = 4-vinylphenol + CO2. It catalyses the reaction (E)-cinnamate + H(+) = styrene + CO2. It carries out the reaction (E)-ferulate + H(+) = 2-methoxy-4-vinylphenol + CO2. Catalyzes the reversible decarboxylation of aromatic carboxylic acids like ferulic acid, p-coumaric acid or cinnamic acid, producing the corresponding vinyl derivatives 4-vinylphenol, 4-vinylguaiacol, and styrene, respectively, which play the role of aroma metabolites. The protein is Ferulic acid decarboxylase 1 of Candida dubliniensis (strain CD36 / ATCC MYA-646 / CBS 7987 / NCPF 3949 / NRRL Y-17841) (Yeast).